The chain runs to 325 residues: All-trans-nonaprenyl-diphosphate synthase (geranyl-diphosphate specific) (325 aa).

Lysine 48, arginine 51, and histidine 81 together coordinate isopentenyl diphosphate. Mg(2+) is bound by residues aspartate 88 and aspartate 92. Arginine 97 contacts an all-trans-polyprenyl diphosphate. Arginine 98 serves as a coordination point for isopentenyl diphosphate. Lysine 174, threonine 175, glutamine 211, and lysine 228 together coordinate an all-trans-polyprenyl diphosphate.

This sequence belongs to the FPP/GGPP synthase family. Homodimer. It depends on Mg(2+) as a cofactor.

The enzyme catalyses 7 isopentenyl diphosphate + (2E)-geranyl diphosphate = all-trans-nonaprenyl diphosphate + 7 diphosphate. Catalyzes the sequential condensation of isopentenyl diphosphate (IPP) with the allylic substrate to give solanesyl diphosphate. Could be important to determine the side chain length of ubiquinone. The polypeptide is All-trans-nonaprenyl-diphosphate synthase (geranyl-diphosphate specific) (sdsA) (Rhodobacter capsulatus (Rhodopseudomonas capsulata)).